The following is a 280-amino-acid chain: Ribosomal RNA-processing protein 7 homolog A (280 aa).

The span at 1–10 (MVSRRKKRKA) shows a compositional bias: basic residues. The interval 1–24 (MVSRRKKRKAGGHEESIPSPPGYS) is disordered. The 101-residue stretch at 59-159 (RTLFILNVPP…SGIHKWISDY (101 aa)) folds into the RRM domain. Position 99 is a phosphoserine (Ser99).

This sequence belongs to the RRP7 family. In terms of assembly, part of the small subunit (SSU) processome, composed of more than 70 proteins and the RNA chaperone small nucleolar RNA (snoRNA) U3. Interacts with NOL6; required for NOL6 localization to nucleolus.

It is found in the nucleus. It localises to the nucleolus. The protein resides in the cell projection. Its subcellular location is the cilium. The protein localises to the cytoplasm. It is found in the cytoskeleton. It localises to the microtubule organizing center. The protein resides in the centrosome. Nucleolar protein that is involved in ribosomal RNA (rRNA) processing. Also plays a role in primary cilia resorption, and cell cycle progression in neurogenesis and neocortex development. Part of the small subunit (SSU) processome, first precursor of the small eukaryotic ribosomal subunit. During the assembly of the SSU processome in the nucleolus, many ribosome biogenesis factors, an RNA chaperone and ribosomal proteins associate with the nascent pre-rRNA and work in concert to generate RNA folding, modifications, rearrangements and cleavage as well as targeted degradation of pre-ribosomal RNA by the RNA exosome. This is Ribosomal RNA-processing protein 7 homolog A (Rrp7a) from Mus musculus (Mouse).